A 351-amino-acid polypeptide reads, in one-letter code: tRNA-specific 2-thiouridylase MnmA (351 aa).

Residues 7–14 (GLSGGVDS) and Leu33 contribute to the ATP site. The active-site Nucleophile is the Cys94. The cysteines at positions 94 and 193 are disulfide-linked. Gly119 lines the ATP pocket. The interaction with tRNA stretch occupies residues 143–145 (KDQ). Residue Cys193 is the Cysteine persulfide intermediate of the active site. The segment at 298–299 (RY) is interaction with tRNA.

Belongs to the MnmA/TRMU family.

It is found in the cytoplasm. It catalyses the reaction S-sulfanyl-L-cysteinyl-[protein] + uridine(34) in tRNA + AH2 + ATP = 2-thiouridine(34) in tRNA + L-cysteinyl-[protein] + A + AMP + diphosphate + H(+). Its function is as follows. Catalyzes the 2-thiolation of uridine at the wobble position (U34) of tRNA, leading to the formation of s(2)U34. In Nostoc punctiforme (strain ATCC 29133 / PCC 73102), this protein is tRNA-specific 2-thiouridylase MnmA.